A 118-amino-acid chain; its full sequence is uncharacterized protein (118 aa).

2 consecutive transmembrane segments (helical) span residues 5–25 (AFFN…SMVI) and 40–57 (FLTF…QHYI).

The protein resides in the membrane. This is an uncharacterized protein from African swine fever virus (strain Badajoz 1971 Vero-adapted) (Ba71V).